A 474-amino-acid chain; its full sequence is Coiled-coil domain-containing protein 6 (474 aa).

A compositionally biased stretch (acidic residues) spans 1 to 10 (MADSASESDT). The segment at 1 to 47 (MADSASESDTDGAGGNSSSSAAMQSSCSSTSGGGGGGGGGGGGGKSG) is disordered. N-acetylalanine is present on Ala-2. The segment covering 16–30 (NSSSSAAMQSSCSST) has biased composition (low complexity). Gly residues predominate over residues 31–47 (SGGGGGGGGGGGGGKSG). Phosphoserine is present on Ser-52. Positions 53–237 (PFRLEELTNR…KRILQEKLDQ (185 aa)) form a coiled coil. 3 tandem repeats follow at residues 106-134 (EQEE…AVNY), 135-163 (EKEE…EQHL), and 164-192 (EQEQ…QLTL). The 5 X 29 AA tandem repeats stretch occupies residues 106-235 (EQEEEFISNT…AEKRILQEKL (130 aa)). One copy of the 4; approximate repeat lies at 193 to 206 (EQLRREKIDLENTL). Residues 207–235 (EQEQEALVNRLWKRMDKLEAEKRILQEKL) form repeat 5. A phosphoserine mark is found at Ser-240, Ser-244, Ser-249, Ser-254, Ser-284, and Ser-323. A coiled-coil region spans residues 253 to 332 (DSPENMMRHI…SESESSLEMD (80 aa)). Positions 342-369 (AQGLRPRTVSSPIPYTPSPSSSRPISPG) are disordered. Thr-349 is modified (phosphothreonine). Over residues 351 to 368 (SSPIPYTPSPSSSRPISP) the composition is skewed to low complexity. A phosphoserine mark is found at Ser-363 and Ser-367. Arg-387 bears the Omega-N-methylarginine mark. Ser-395 and Ser-413 each carry phosphoserine. The disordered stretch occupies residues 397 to 474 (GLHVQHMGTS…QHSAHPSSQP (78 aa)). Residues 426–451 (PTPPPSPNTQTPVQPPPPPPPPPMQP) show a composition bias toward pro residues. Positions 442–451 (PPPPPPPMQP) match the SH3-binding motif. Over residues 459–474 (SQPTPSQHSAHPSSQP) the composition is skewed to low complexity.

In terms of tissue distribution, ubiquitously expressed.

It is found in the cytoplasm. It localises to the cytoskeleton. This chain is Coiled-coil domain-containing protein 6 (CCDC6), found in Homo sapiens (Human).